The sequence spans 500 residues: Probable cytosol aminopeptidase (500 aa).

Mn(2+) contacts are provided by lysine 265 and aspartate 270. Residue lysine 277 is part of the active site. Residues aspartate 288, aspartate 347, and glutamate 349 each coordinate Mn(2+). The active site involves arginine 351.

The protein belongs to the peptidase M17 family. Requires Mn(2+) as cofactor.

It localises to the cytoplasm. The catalysed reaction is Release of an N-terminal amino acid, Xaa-|-Yaa-, in which Xaa is preferably Leu, but may be other amino acids including Pro although not Arg or Lys, and Yaa may be Pro. Amino acid amides and methyl esters are also readily hydrolyzed, but rates on arylamides are exceedingly low.. It carries out the reaction Release of an N-terminal amino acid, preferentially leucine, but not glutamic or aspartic acids.. Presumably involved in the processing and regular turnover of intracellular proteins. Catalyzes the removal of unsubstituted N-terminal amino acids from various peptides. In Rickettsia rickettsii (strain Iowa), this protein is Probable cytosol aminopeptidase.